A 562-amino-acid polypeptide reads, in one-letter code: Zinc finger protein 579 (562 aa).

Pro residues predominate over residues 1 to 11 (MDPQPPPPAQG). Residues 1–43 (MDPQPPPPAQGSPPHRGRGRGRGRGRGRGRGRGRGGAGAPRAP) are disordered. Basic residues predominate over residues 15–33 (HRGRGRGRGRGRGRGRGRG). C2H2-type zinc fingers lie at residues 44–66 (LPCP…RLSH), 72–94 (HACP…LRGH), and 100–123 (LRCA…AQEH). Arg-92 is modified (omega-N-methylarginine). The disordered stretch occupies residues 139–203 (TAEPSWGPQD…SESEEAEAGA (65 aa)). Phosphoserine occurs at positions 194 and 196. 2 C2H2-type zinc fingers span residues 270–292 (HQCS…RLVH) and 298–320 (FVCP…RRVH). Positions 327 to 379 (APLPAAGKKDDKASGARNSAKGPEGGEGAECGGASEGGEGQNGGDAAPARPPA) are disordered. The segment covering 349–369 (PEGGEGAECGGASEGGEGQNG) has biased composition (gly residues). 3 C2H2-type zinc fingers span residues 384 to 406 (FWCP…GVTH), 412 to 434 (FQCV…AQVH), and 441 to 463 (HPCP…QRCH). The disordered stretch occupies residues 477 to 562 (QAQAPTSPPP…HLRGLGGLAS (86 aa)). Pro residues-rich tracts occupy residues 482–491 (TSPPPPPPPL) and 512–525 (PSPG…PAPP). At Ser-483 the chain carries Phosphoserine.

This sequence belongs to the krueppel C2H2-type zinc-finger protein family.

It localises to the nucleus. May be involved in transcriptional regulation. The sequence is that of Zinc finger protein 579 (ZNF579) from Homo sapiens (Human).